The primary structure comprises 429 residues: MSVNVNRSVSDQFYRYKMPRLIAKVEGKGNGIKTVIVNMVDVAKALNRPPTYPTKYFGCELGAQTQFDVKNDRYIVNGSHEANKLQDMLDGFIKKFVLCPECENPETDLHVNPKKQTIGNSCKACGYRGMLDTHHKLCTFILKNPPENSDIGTGKKEKEKKNRKGKDKENGSVSTSETPPPPPPNEISPPHAVEEEEDDDWGEDTTEEAQRRRMDEISDHAKGLTLSDDLERTVEERVNILFDFVKKKKEEGIIDSSDKDIVAEAERLDVKAMGPLVLTEVLFDEKIREQIKKYRRHFLRFCHNNKKAQRYLLHGLECVVAMHQAQLISKIPHILKEMYDADLLEEEVIISWSEKASKKYVSKELAKEIRVKAEPFIKWLKEAEEESSGGEEEDEDENIEVVYSKTASVPKVETVKSDNKDDDIDIDAI.

S10 bears the Phosphoserine mark. Position 27–34 (27–34 (GKGNGIKT)) interacts with GTP. The disordered stretch occupies residues 143-216 (KNPPENSDIG…EEAQRRRMDE (74 aa)). Positions 153-170 (TGKKEKEKKNRKGKDKEN) are enriched in basic and acidic residues. Residues 178 to 187 (TPPPPPPNEI) are compositionally biased toward pro residues. Positions 194–207 (EEEEDDDWGEDTTE) are enriched in acidic residues. Residue T225 is modified to Phosphothreonine. Phosphoserine occurs at positions 227, 387, 388, and 408. Residues 231-390 (ERTVEERVNI…KEAEEESSGG (160 aa)) form the W2 domain. Residues K411 and K416 each participate in a glycyl lysine isopeptide (Lys-Gly) (interchain with G-Cter in SUMO2) cross-link. Position 417 is a phosphoserine (S417).

It belongs to the eIF-2-beta/eIF-5 family. As to quaternary structure, component of the 43S pre-initiation complex (43S PIC), which is composed of the 40S ribosomal subunit, EIF1, eIF1A (EIF1AX), eIF3 complex, EIF5 and eIF2-GTP-initiator tRNA complex (eIF2 ternary complex). Interacts with eIF1A (EIF1AX) during scanning. Interacts through its C-terminal domain (CTD) with EIF1 or with eIF2-beta (EIF2S2) (mutually exclusive) through a common binding site. Interacts through its C-terminal domain (CTD) with the CTD of EIF5B. Interacts with FMR1 isoform 6; this interaction occurs in a RNA-dependent manner.

The protein localises to the cytoplasm. In terms of biological role, component of the 43S pre-initiation complex (43S PIC), which binds to the mRNA cap-proximal region, scans mRNA 5'-untranslated region, and locates the initiation codon. In this complex, acts as a GTPase-activating protein, by promoting GTP hydrolysis by eIF2G (EIF2S3). During scanning, interacts with both EIF1 (via its C-terminal domain (CTD)) and EIF1A (via its NTD). This interaction with EIF1A contributes to the maintenance of EIF1 within the open 43S PIC. When start codon is recognized, EIF5, via its NTD, induces eIF2G (EIF2S3) to hydrolyze the GTP. Start codon recognition also induces a conformational change of the PIC to a closed state. This change increases the affinity of EIF5-CTD for EIF2-beta (EIF2S2), which allows the release, by an indirect mechanism, of EIF1 from the PIC. Finally, EIF5 stabilizes the PIC in its closed conformation. In Rattus norvegicus (Rat), this protein is Eukaryotic translation initiation factor 5 (Eif5).